Consider the following 427-residue polypeptide: MSLNYEQNAADEQFARAHKAVSLSDDEESEGQAETTSAPNQEPHVSKSPREYYDEPGGKGNGSGADDQDEPETEAASGAANTHVVAHHYNELKEAGRKDRQKSKIFFMRNFNNWIKSQLINEYMSQIKQNKRMGDALRVLDMCCGKGGDLLKWEKAAISHLICTDIAEVSVEQCQRRYQDILQRSEKSKFANKFTAEFFACDSTLVRLRERYKDPSLQLNLVSCQFAFHYCFESMAQADCMMRNAAECLKPGGFFIATMPDAYEIIRRLRAAGPDARRFGNDVYSIEFDCETDPLPLFGAKYQFHLEGVVDCPEFLVHFPTLVKLGRKYGLQLLKRSTFADYYKENLHHGRHLLQRMSGLESVQPQRCENDEEFAHVSNFQGAQRSRSVGTLSKSEWEAATLYLVCAFKKCKNTWDTNGKPLFEFDD.

The disordered stretch occupies residues 1-79 (MSLNYEQNAA…EPETEAASGA (79 aa)). A phosphoserine mark is found at S22, S24, S29, S46, and S48. A compositionally biased stretch (basic and acidic residues) spans 44–57 (HVSKSPREYYDEPG). One can recognise an mRNA cap 0 methyltransferase domain in the interval 103–411 (SKIFFMRNFN…LYLVCAFKKC (309 aa)). Residue 112-113 (NN) coordinates mRNA. S-adenosyl-L-methionine is bound by residues K116, C143, D165, D202, Q225, and Y230.

Belongs to the class I-like SAM-binding methyltransferase superfamily. mRNA cap 0 methyltransferase family.

The protein localises to the nucleus. It carries out the reaction a 5'-end (5'-triphosphoguanosine)-ribonucleoside in mRNA + S-adenosyl-L-methionine = a 5'-end (N(7)-methyl 5'-triphosphoguanosine)-ribonucleoside in mRNA + S-adenosyl-L-homocysteine. Functionally, mRNA-capping methyltransferase that methylates the N7 position of the added guanosine to the 5'-cap structure of mRNAs. Binds RNA containing 5'-terminal GpppC. The sequence is that of mRNA cap guanine-N(7) methyltransferase from Drosophila melanogaster (Fruit fly).